The following is a 313-amino-acid chain: Small glutamine-rich tetratricopeptide repeat-containing protein alpha (313 aa).

The tract at residues 69-97 (KELPPDLRSPQETPPSEEDSAEAERLKTE) is disordered. Ser-77 is modified (phosphoserine). The residue at position 81 (Thr-81) is a Phosphothreonine. Ser-84 is modified (phosphoserine). 3 TPR repeats span residues 91–124 (AERL…NPAN), 125–158 (AVYF…DPSY), and 159–192 (SKAY…DPDN). N6-acetyllysine is present on Lys-137. A Phosphoserine modification is found at Ser-301. At Thr-303 the chain carries Phosphothreonine. At Ser-305 the chain carries Phosphoserine.

The protein belongs to the SGT family. As to quaternary structure, homodimer. Homooligomer. Interacts with DNAJC5 and DNAJC5B. Interacts (via TPR repeats) with HSP90AA1. Interacts (via Gln-rich region) with SLC2A1. Interacts with HSP90AB1. Interacts (via TPR repeats) with HSPA8/Hsc70; the interaction is direct. Interacts with BAG6 (via ubiquitin-like domain); interaction prevents interaction between BAG6 and RNF126. Forms a multiprotein complex, at least composed of DNAJB12, DNAJB14, HSPA8/Hsc70 and SGTA; interaction with DNAJB14 and HSPA8/Hsc70 is direct.

It localises to the cytoplasm. The protein localises to the nucleus. Its function is as follows. Co-chaperone that binds misfolded and hydrophobic patches-containing client proteins in the cytosol. Mediates their targeting to the endoplasmic reticulum but also regulates their sorting to the proteasome when targeting fails. Functions in tail-anchored/type II transmembrane proteins membrane insertion constituting with ASNA1 and the BAG6 complex a targeting module. Functions upstream of the BAG6 complex and ASNA1, binding more rapidly the transmembrane domain of newly synthesized proteins. It is also involved in the regulation of the endoplasmic reticulum-associated misfolded protein catabolic process via its interaction with BAG6: collaborates with the BAG6 complex to maintain hydrophobic substrates in non-ubiquitinated states. Competes with RNF126 for interaction with BAG6, preventing the ubiquitination of client proteins associated with the BAG6 complex. Binds directly to HSC70 and HSP70 and regulates their ATPase activity. The polypeptide is Small glutamine-rich tetratricopeptide repeat-containing protein alpha (SGTA) (Bos taurus (Bovine)).